Here is a 100-residue protein sequence, read N- to C-terminus: NADH-ubiquinone oxidoreductase chain 4L (100 aa).

Transmembrane regions (helical) follow at residues 3-23 (ILNHFIFTFFLFCLGLFGIIL), 28-48 (IIIILMSIELLLLSINLNFIY), and 64-84 (LILTVAAAESAIGLAIMIVFF).

The protein belongs to the complex I subunit 4L family.

It is found in the mitochondrion membrane. It catalyses the reaction a ubiquinone + NADH + 5 H(+)(in) = a ubiquinol + NAD(+) + 4 H(+)(out). Core subunit of the mitochondrial membrane respiratory chain NADH dehydrogenase (Complex I) that is believed to belong to the minimal assembly required for catalysis. Complex I functions in the transfer of electrons from NADH to the respiratory chain. The immediate electron acceptor for the enzyme is believed to be ubiquinone. The polypeptide is NADH-ubiquinone oxidoreductase chain 4L (ND4L) (Phytophthora infestans (Potato late blight agent)).